A 250-amino-acid chain; its full sequence is AA9 family lytic polysaccharide monooxygenase B (250 aa).

Residues 1–21 (MTLSKITSIAGLLASASLVAG) form the signal peptide. Residues H22 and H107 each contribute to the Cu(2+) site. A Methylhistidine modification is found at H22. 2 cysteine pairs are disulfide-bonded: C77–C199 and C118–C122. N-linked (GlcNAc...) asparagine glycosylation is present at N159. Residues H185 and Q194 each contribute to the O2 site. Y196 is a Cu(2+) binding site.

It belongs to the polysaccharide monooxygenase AA9 family. Cu(2+) serves as cofactor. In terms of processing, the catalytically essential N-terminal histidine His-22 is post-translationally modified by methylation to prevent protonation of the histidine side chain, and protect the critical active site of the enzyme from oxidative damage.

The protein resides in the secreted. It carries out the reaction [(1-&gt;4)-beta-D-glucosyl]n+m + reduced acceptor + O2 = 4-dehydro-beta-D-glucosyl-[(1-&gt;4)-beta-D-glucosyl]n-1 + [(1-&gt;4)-beta-D-glucosyl]m + acceptor + H2O.. In terms of biological role, lytic polysaccharide monooxygenase (LPMO) that depolymerizes crystalline and amorphous polysaccharides via the oxidation of scissile alpha- or beta-(1-4)-glycosidic bonds, yielding C1 and C4 oxidation products. Catalysis by LPMOs requires the reduction of the active-site copper from Cu(II) to Cu(I) by a reducing agent and H(2)O(2) or O(2) as a cosubstrate. Shows activity on phosphoric acid swollen cellulose, on NaOH pretreated soy spent flakes as well as on crystalline cellulose (Avicel). Does not have a positive effect on cel6A activity, but acts synergistically with endoglucanase egl7. The chain is AA9 family lytic polysaccharide monooxygenase B from Aspergillus fumigatus (strain ATCC MYA-4609 / CBS 101355 / FGSC A1100 / Af293) (Neosartorya fumigata).